A 107-amino-acid chain; its full sequence is uncharacterized protein (107 aa).

The next 3 membrane-spanning stretches (helical) occupy residues Thr-15–Ser-35, Leu-43–Tyr-63, and Tyr-87–Phe-107.

It localises to the membrane. This is an uncharacterized protein from Saccharomyces cerevisiae (strain ATCC 204508 / S288c) (Baker's yeast).